Consider the following 76-residue polypeptide: Protein OPG128 (76 aa).

Residues Cys-17 and Cys-21 are joined by a disulfide bond.

Belongs to the orthopoxvirus OPG128 family. As to quaternary structure, interacts with sulfhydryl oxidase OPG072; this interaction involves formation of a transient disulfide-bonded intermediate, allowing disulfide bond transfer. Interacts with OPG088; this interaction involves formation of a transient disulfide-bonded intermediate, allowing disulfide bond transfer.

Late protein which probably participates in disulfide bond formation by functioning as a thiol-disulfide transfer protein between membrane-associated OPG072 and OPG08. The complete pathway for formation of disulfide bonds in intracellular virion membrane proteins sequentially involves oxidation of OPG072, OPG128 and OPG08. In Homo sapiens (Human), this protein is Protein OPG128 (OPG128).